The sequence spans 190 residues: NADH-quinone oxidoreductase subunit B (190 aa).

The [4Fe-4S] cluster site is built by Cys-39, Cys-40, Cys-104, and Cys-135.

Belongs to the complex I 20 kDa subunit family. NDH-1 is composed of 14 different subunits. Subunits NuoB, C, D, E, F, and G constitute the peripheral sector of the complex. [4Fe-4S] cluster is required as a cofactor.

The protein localises to the cell inner membrane. The catalysed reaction is a quinone + NADH + 5 H(+)(in) = a quinol + NAD(+) + 4 H(+)(out). Functionally, NDH-1 shuttles electrons from NADH, via FMN and iron-sulfur (Fe-S) centers, to quinones in the respiratory chain. The immediate electron acceptor for the enzyme in this species is believed to be a menaquinone. Couples the redox reaction to proton translocation (for every two electrons transferred, four hydrogen ions are translocated across the cytoplasmic membrane), and thus conserves the redox energy in a proton gradient. In Prosthecochloris aestuarii (strain DSM 271 / SK 413), this protein is NADH-quinone oxidoreductase subunit B.